The sequence spans 393 residues: Demethylspheroidene O-methyltransferase (393 aa).

A disordered region spans residues 1 to 36; sequence MPKDDHTGATADRTAQPTGTGKQPLVPGQPGAAPVQ. The segment covering 26–36 has biased composition (low complexity); that stretch reads VPGQPGAAPVQ. S-adenosyl-L-methionine contacts are provided by D259 and R297.

It belongs to the class I-like SAM-binding methyltransferase superfamily. Cation-independent O-methyltransferase family.

It carries out the reaction demethylspheroidene + S-adenosyl-L-methionine = spheroidene + S-adenosyl-L-homocysteine + H(+). It participates in carotenoid biosynthesis; spheroidene biosynthesis. Its function is as follows. Methyltransferase that mediates the O-methylation of 1-hydroxy carotenoids. Converts hydroxyneurosporene to methoxyneurosporene or demethylspheroidene to spheroidene. Also able to produce spirilloxanthin. This is Demethylspheroidene O-methyltransferase (crtF) from Rhodobacter capsulatus (strain ATCC BAA-309 / NBRC 16581 / SB1003).